Here is a 637-residue protein sequence, read N- to C-terminus: Probable polypeptide N-acetylgalactosaminyltransferase 8 (637 aa).

At 1 to 6 the chain is on the cytoplasmic side; sequence MMFWRK. A helical; Signal-anchor for type II membrane protein transmembrane segment spans residues 7–29; it reads LPKALFIGLTLAIAVNLLLVFSS. Residues 30–637 lie on the Lumenal side of the membrane; sequence KGTLQNLFTG…VRDWGQTNSQ (608 aa). N-linked (GlcNAc...) asparagine glycans are attached at residues Asn-85, Asn-107, and Asn-160. Disulfide bonds link Cys-171/Cys-404, Cys-395/Cys-474, Cys-509/Cys-525, Cys-556/Cys-571, and Cys-599/Cys-617. Residues 180–294 form a catalytic subdomain A region; it reads LPSLSVILIF…VGWAEPILAR (115 aa). Residues Asp-221 and Arg-255 each coordinate substrate. The Mn(2+) site is built by Asp-278, His-280, and His-409. The catalytic subdomain B stretch occupies residues 351–412; the sequence is PVKSPSIMGI…PCSRIAHLER (62 aa). Residues Arg-412 and Tyr-417 each coordinate substrate. The region spanning 496 to 634 is the Ricin B-type lectin domain; that stretch reads GYGRMKNLLD…QHTVRDWGQT (139 aa).

This sequence belongs to the glycosyltransferase 2 family. GalNAc-T subfamily. Mn(2+) is required as a cofactor. As to expression, widely expressed. Expressed in heart, skeletal muscle, kidney, liver, small intestine and placenta. Weakly expressed in colon, thymus, spleen, lung and leukocyte.

It is found in the golgi apparatus membrane. It carries out the reaction L-seryl-[protein] + UDP-N-acetyl-alpha-D-galactosamine = a 3-O-[N-acetyl-alpha-D-galactosaminyl]-L-seryl-[protein] + UDP + H(+). The catalysed reaction is L-threonyl-[protein] + UDP-N-acetyl-alpha-D-galactosamine = a 3-O-[N-acetyl-alpha-D-galactosaminyl]-L-threonyl-[protein] + UDP + H(+). Its pathway is protein modification; protein glycosylation. Probably catalyzes the initial reaction in O-linked oligosaccharide biosynthesis, the transfer of an N-acetyl-D-galactosamine residue to a serine or threonine residue on the protein receptor. The chain is Probable polypeptide N-acetylgalactosaminyltransferase 8 (GALNT8) from Homo sapiens (Human).